A 312-amino-acid polypeptide reads, in one-letter code: Glyoxylate/hydroxypyruvate reductase A (312 aa).

The active site involves arginine 227. Histidine 275 acts as the Proton donor in catalysis.

The protein belongs to the D-isomer specific 2-hydroxyacid dehydrogenase family. GhrA subfamily.

It is found in the cytoplasm. The enzyme catalyses glycolate + NADP(+) = glyoxylate + NADPH + H(+). The catalysed reaction is (R)-glycerate + NAD(+) = 3-hydroxypyruvate + NADH + H(+). It catalyses the reaction (R)-glycerate + NADP(+) = 3-hydroxypyruvate + NADPH + H(+). In terms of biological role, catalyzes the NADPH-dependent reduction of glyoxylate and hydroxypyruvate into glycolate and glycerate, respectively. This chain is Glyoxylate/hydroxypyruvate reductase A, found in Escherichia coli O81 (strain ED1a).